A 654-amino-acid polypeptide reads, in one-letter code: Probable protein phosphatase 2C 23 (654 aa).

The tract at residues 11 to 30 (CLTGGAGRNKKPELSILEPD) is disordered. Ser147 bears the Phosphoserine mark. A PPM-type phosphatase domain is found at 243–645 (DVSLESQNLQ…DDVSIVVISL (403 aa)). Residues Asp280 and Gly281 each contribute to the Mn(2+) site. The tract at residues 309–336 (DDPKTDAKSSDEADVENRDSSSEKKSKN) is disordered. Residues Asp573 and Asp636 each contribute to the Mn(2+) site.

This sequence belongs to the PP2C family. Mg(2+) is required as a cofactor. Requires Mn(2+) as cofactor. In terms of tissue distribution, expressed in seedlings, roots, leaves, stems, young inflorescences, flowers and siliques.

The protein localises to the nucleus. It carries out the reaction O-phospho-L-seryl-[protein] + H2O = L-seryl-[protein] + phosphate. The enzyme catalyses O-phospho-L-threonyl-[protein] + H2O = L-threonyl-[protein] + phosphate. Functionally, involved in leaf development regulation. The polypeptide is Probable protein phosphatase 2C 23 (PLL4) (Arabidopsis thaliana (Mouse-ear cress)).